The following is a 506-amino-acid chain: Glutamate--tRNA ligase (506 aa).

The short motif at P23 to L33 is the 'HIGH' region element. Positions K267–R271 match the 'KMSKS' region motif. K270 contacts ATP.

Belongs to the class-I aminoacyl-tRNA synthetase family. Glutamate--tRNA ligase type 1 subfamily. As to quaternary structure, monomer.

The protein resides in the cytoplasm. It carries out the reaction tRNA(Glu) + L-glutamate + ATP = L-glutamyl-tRNA(Glu) + AMP + diphosphate. Functionally, catalyzes the attachment of glutamate to tRNA(Glu) in a two-step reaction: glutamate is first activated by ATP to form Glu-AMP and then transferred to the acceptor end of tRNA(Glu). The sequence is that of Glutamate--tRNA ligase from Clavibacter sepedonicus (Clavibacter michiganensis subsp. sepedonicus).